A 616-amino-acid polypeptide reads, in one-letter code: Dihydroxy-acid dehydratase (616 aa).

Asp-81 provides a ligand contact to Mg(2+). Cys-122 contributes to the [2Fe-2S] cluster binding site. Mg(2+)-binding residues include Asp-123 and Lys-124. Residue Lys-124 is modified to N6-carboxylysine. Cys-195 lines the [2Fe-2S] cluster pocket. Glu-491 contributes to the Mg(2+) binding site. Ser-517 functions as the Proton acceptor in the catalytic mechanism.

It belongs to the IlvD/Edd family. Homodimer. The cofactor is [2Fe-2S] cluster. Requires Mg(2+) as cofactor.

It carries out the reaction (2R)-2,3-dihydroxy-3-methylbutanoate = 3-methyl-2-oxobutanoate + H2O. The enzyme catalyses (2R,3R)-2,3-dihydroxy-3-methylpentanoate = (S)-3-methyl-2-oxopentanoate + H2O. The protein operates within amino-acid biosynthesis; L-isoleucine biosynthesis; L-isoleucine from 2-oxobutanoate: step 3/4. It participates in amino-acid biosynthesis; L-valine biosynthesis; L-valine from pyruvate: step 3/4. In terms of biological role, functions in the biosynthesis of branched-chain amino acids. Catalyzes the dehydration of (2R,3R)-2,3-dihydroxy-3-methylpentanoate (2,3-dihydroxy-3-methylvalerate) into 2-oxo-3-methylpentanoate (2-oxo-3-methylvalerate) and of (2R)-2,3-dihydroxy-3-methylbutanoate (2,3-dihydroxyisovalerate) into 2-oxo-3-methylbutanoate (2-oxoisovalerate), the penultimate precursor to L-isoleucine and L-valine, respectively. The chain is Dihydroxy-acid dehydratase from Escherichia coli O81 (strain ED1a).